A 198-amino-acid polypeptide reads, in one-letter code: Putative nitroreductase MJ1384 (198 aa).

This sequence belongs to the nitroreductase family. FMN serves as cofactor.

The protein is Putative nitroreductase MJ1384 of Methanocaldococcus jannaschii (strain ATCC 43067 / DSM 2661 / JAL-1 / JCM 10045 / NBRC 100440) (Methanococcus jannaschii).